We begin with the raw amino-acid sequence, 360 residues long: Phospho-N-acetylmuramoyl-pentapeptide-transferase (360 aa).

10 consecutive transmembrane segments (helical) span residues 27 to 47, 72 to 92, 94 to 114, 132 to 152, 168 to 188, 199 to 219, 236 to 256, 263 to 283, 288 to 308, and 338 to 358; these read IVSLLTALFISLWMGPHLIAW, PTMGGLMILFSITISVLMWAY, SNPYVWCVLFILIGYGIVGFI, WKYFWQSIIALAAAFTMYSIG, IMPQLGLLYVLLAYFVIVGTS, GLAIMPTVFVAAGFALVAWAT, AGELVIVCTAIVGAGLGFLWF, VFMGDVGSLALGGALGTIAVL, FLLVIMGGVFVVETLSVILQV, and VIVRFWIISLMLVLIGLATLK.

Belongs to the glycosyltransferase 4 family. MraY subfamily. Mg(2+) serves as cofactor.

It localises to the cell inner membrane. It carries out the reaction UDP-N-acetyl-alpha-D-muramoyl-L-alanyl-gamma-D-glutamyl-meso-2,6-diaminopimeloyl-D-alanyl-D-alanine + di-trans,octa-cis-undecaprenyl phosphate = di-trans,octa-cis-undecaprenyl diphospho-N-acetyl-alpha-D-muramoyl-L-alanyl-D-glutamyl-meso-2,6-diaminopimeloyl-D-alanyl-D-alanine + UMP. It participates in cell wall biogenesis; peptidoglycan biosynthesis. Its function is as follows. Catalyzes the initial step of the lipid cycle reactions in the biosynthesis of the cell wall peptidoglycan: transfers peptidoglycan precursor phospho-MurNAc-pentapeptide from UDP-MurNAc-pentapeptide onto the lipid carrier undecaprenyl phosphate, yielding undecaprenyl-pyrophosphoryl-MurNAc-pentapeptide, known as lipid I. This is Phospho-N-acetylmuramoyl-pentapeptide-transferase from Yersinia pestis bv. Antiqua (strain Angola).